The chain runs to 137 residues: Putative pre-16S rRNA nuclease (137 aa).

It belongs to the YqgF nuclease family.

The protein resides in the cytoplasm. Could be a nuclease involved in processing of the 5'-end of pre-16S rRNA. This is Putative pre-16S rRNA nuclease from Anaeromyxobacter dehalogenans (strain 2CP-1 / ATCC BAA-258).